The primary structure comprises 160 residues: Ribosomal RNA large subunit methyltransferase H (160 aa).

S-adenosyl-L-methionine-binding positions include Leu-77, Gly-109, and 128-133; that span reads FGRITL.

This sequence belongs to the RNA methyltransferase RlmH family. Homodimer.

It localises to the cytoplasm. It catalyses the reaction pseudouridine(1915) in 23S rRNA + S-adenosyl-L-methionine = N(3)-methylpseudouridine(1915) in 23S rRNA + S-adenosyl-L-homocysteine + H(+). In terms of biological role, specifically methylates the pseudouridine at position 1915 (m3Psi1915) in 23S rRNA. The polypeptide is Ribosomal RNA large subunit methyltransferase H (Oenococcus oeni (strain ATCC BAA-331 / PSU-1)).